A 419-amino-acid chain; its full sequence is Appendage-associated protein (419 aa).

Positions 1–39 (MIVTYGTVGCPVSRGGSPGCGRRIAEELRLAEDARLRLA) are cleaved as a signal peptide. Residues 232-262 (ERQKAQRRREERAAKAREELRKELNDIDAKW) adopt a coiled-coil conformation.

The protein localises to the secreted. In terms of biological role, associates with actin filament appendages that are formed in the inclusion appendages of the parasitophorous vacuole during infection of the host erythrocyte. The protein is Appendage-associated protein of Anaplasma marginale (strain St. Maries).